Reading from the N-terminus, the 457-residue chain is Chromogranin-A (457 aa).

An N-terminal signal peptide occupies residues 1-18; the sequence is MRSAAVLALLLCAGQVTA. Cysteines 35 and 56 form a disulfide. Residues 41–59 form an O-glycosylated at one site only in cerebrospinal fluid region; the sequence is SDTLSKPSPMPVSQECFET. Residues 88-440 are disordered; the sequence is KERAHQQKKH…DQELESLSAI (353 aa). Basic and acidic residues predominate over residues 116–144; it reads ELKEAVEEPSSKDVMEKREDSKEAEKSGE. Residue Ser142 is modified to Phosphoserine. Residues 171–180 show a composition bias toward acidic residues; it reads GEEEEEEEEA. Residues Thr181 and Thr183 are each glycosylated (O-linked (GalNAc...) threonine). Residues 181–191 are O-glycosylated at one site only in cerebrospinal fluid; sequence TNTHPPASLPS. A compositionally biased stretch (polar residues) spans 182 to 191; that stretch reads NTHPPASLPS. The residue at position 194 (Tyr194) is a Phosphotyrosine. A phosphoserine mark is found at Ser203 and Ser218. A compositionally biased stretch (acidic residues) spans 229 to 249; sequence EEEEEEEEAEAGEEAVPEEEG. The O-linked (GalNAc...) threonine glycan is linked to Thr251. Basic and acidic residues-rich tracts occupy residues 263–272 and 291–303; these read KEIRKGESRS and PEGK…SQQK. Residues Ser270 and Ser300 each carry the phosphoserine modification. Gly319 bears the Glycine amide mark. Ser322, Ser333, and Ser371 each carry phosphoserine. Positions 330-360 are enriched in basic and acidic residues; sequence ERLSKEWEDSKRWSKMDQLAKELTAEKRLEG. Position 372 is a methionine sulfoxide (Met372). Phosphoserine occurs at positions 398, 402, 424, and 438. Over residues 414–431 the composition is skewed to basic and acidic residues; sequence YPEEKKEEEGSANRRPED. O-linked (Xyl...) (chondroitin sulfate) serine glycosylation occurs at Ser424. The residue at position 456 (Arg456) is an Arginine amide.

This sequence belongs to the chromogranin/secretogranin protein family. Self-interacts; self-assembly is promoted in vitro by chondroitin sulfate attachment which occurs at mildly acidic pH conditions. Interacts with SCG3. Interacts with ITPR1 in the secretory granules. Post-translationally, sulfated on tyrosine residues and/or contains sulfated glycans. In terms of processing, O-glycosylated with core 1 or possibly core 8 glycans. Contains chondroitin sulfate (CS); CS attachment is pH-dependent, being observed at mildly acidic conditions of pH 5 but not at neutral pH, and promotes self-assembly in vitro. Proteolytic processing gives rise to an additional longer form of catestatin (residues 358-390) which displays a less potent catecholamine release-inhibitory activity. Plasmin-mediated proteolytic processing can give rise to additional shorter and longer forms of catestatin peptides. As to expression, detected in cerebrospinal fluid (at protein level). Detected in urine (at protein level). In terms of tissue distribution, found in the brain.

It localises to the secreted. The protein localises to the cytoplasmic vesicle. Its subcellular location is the secretory vesicle. The protein resides in the neuronal dense core vesicle. Functionally, strongly inhibits glucose induced insulin release from the pancreas. Inhibits catecholamine release from chromaffin cells and noradrenergic neurons by acting as a non-competitive nicotinic cholinergic antagonist. Displays antibacterial activity against Gram-positive bacteria S.aureus and M.luteus, and Gram-negative bacteria E.coli and P.aeruginosa. Can induce mast cell migration, degranulation and production of cytokines and chemokines. Acts as a potent scavenger of free radicals in vitro. May play a role in the regulation of cardiac function and blood pressure. In terms of biological role, regulates granule biogenesis in endocrine cells by up-regulating the transcription of protease nexin 1 (SERPINE2) via a cAMP-PKA-SP1 pathway. This leads to inhibition of granule protein degradation in the Golgi complex which in turn promotes granule formation. The protein is Chromogranin-A (CHGA) of Homo sapiens (Human).